A 148-amino-acid polypeptide reads, in one-letter code: Ribosome maturation factor RimP (148 aa).

Belongs to the RimP family.

It localises to the cytoplasm. In terms of biological role, required for maturation of 30S ribosomal subunits. The protein is Ribosome maturation factor RimP of Nautilia profundicola (strain ATCC BAA-1463 / DSM 18972 / AmH).